The following is a 304-amino-acid chain: ATP phosphoribosyltransferase (304 aa).

This sequence belongs to the ATP phosphoribosyltransferase family. Long subfamily. Mg(2+) serves as cofactor.

It localises to the cytoplasm. It carries out the reaction 1-(5-phospho-beta-D-ribosyl)-ATP + diphosphate = 5-phospho-alpha-D-ribose 1-diphosphate + ATP. Its pathway is amino-acid biosynthesis; L-histidine biosynthesis; L-histidine from 5-phospho-alpha-D-ribose 1-diphosphate: step 1/9. Feedback inhibited by histidine. Functionally, catalyzes the condensation of ATP and 5-phosphoribose 1-diphosphate to form N'-(5'-phosphoribosyl)-ATP (PR-ATP). Has a crucial role in the pathway because the rate of histidine biosynthesis seems to be controlled primarily by regulation of HisG enzymatic activity. The protein is ATP phosphoribosyltransferase of Xanthomonas campestris pv. campestris (strain B100).